A 71-amino-acid polypeptide reads, in one-letter code: uncharacterized protein (71 aa).

Residues 1–26 form the signal peptide; it reads MIKFSVILGMIRCSLTHITTKNTVNA.

This is an uncharacterized protein from Bacillus subtilis (strain 168).